Reading from the N-terminus, the 528-residue chain is Phosphoenolpyruvate carboxykinase (ATP) (528 aa).

Residues Arg56, Tyr192, and Lys198 each contribute to the substrate site. Residues Lys198, His217, and 233–241 (GLSGTGKTT) contribute to the ATP site. Mn(2+) is bound by residues Lys198 and His217. Mn(2+) is bound at residue Asp254. 3 residues coordinate ATP: Glu282, Arg319, and Thr444. Residue Arg319 coordinates substrate.

Belongs to the phosphoenolpyruvate carboxykinase (ATP) family. Requires Mn(2+) as cofactor.

The protein resides in the cytoplasm. It catalyses the reaction oxaloacetate + ATP = phosphoenolpyruvate + ADP + CO2. It functions in the pathway carbohydrate biosynthesis; gluconeogenesis. Involved in the gluconeogenesis. Catalyzes the conversion of oxaloacetate (OAA) to phosphoenolpyruvate (PEP) through direct phosphoryl transfer between the nucleoside triphosphate and OAA. The sequence is that of Phosphoenolpyruvate carboxykinase (ATP) from Geobacillus thermodenitrificans (strain NG80-2).